Consider the following 792-residue polypeptide: Lon protease (792 aa).

Residues 16-208 (LPILPLRETV…KVTYYLTREL (193 aa)) enclose the Lon N-terminal domain. 360–367 (GPPGVGKT) lines the ATP pocket. The region spanning 597–778 (KDEVGVATGL…DEVLNLALLE (182 aa)) is the Lon proteolytic domain. Residues Ser684 and Lys727 contribute to the active site.

This sequence belongs to the peptidase S16 family. As to quaternary structure, homohexamer. Organized in a ring with a central cavity.

It localises to the cytoplasm. It carries out the reaction Hydrolysis of proteins in presence of ATP.. ATP-dependent serine protease that mediates the selective degradation of mutant and abnormal proteins as well as certain short-lived regulatory proteins. Required for cellular homeostasis and for survival from DNA damage and developmental changes induced by stress. Degrades polypeptides processively to yield small peptide fragments that are 5 to 10 amino acids long. Binds to DNA in a double-stranded, site-specific manner. The protein is Lon protease of Dictyoglomus thermophilum (strain ATCC 35947 / DSM 3960 / H-6-12).